The primary structure comprises 442 residues: MMRSLYSGVSGLQNHQTRMDVVGNNIANVNTIGFKKGRVNFQDMISQSISGASRPTDARGGTNPKQVGLGMNVASIDTIHTQGAFQSTQKASDLGVSGNGFFILKEGKNLFYTRAGAFDVDSDRHLVNPANGMRIQGWMARDLEGEKVINTASDIEDLIIPIGDKEGAKSTKNVTFACNLDKRLPLIQEGANPADIARGTWVVNKSLYDSFGNVSVLELRVVKDLNTPNLWNATVLINGEQNSNFTLGFDNEGALASLNGQPGQKGDILQIPITFNVLGANVGEVGEQQTVNLKLGTVGSYTDSITQFADSSSTKAIIQDGYGMGYMENYEIDQNGVIVGIYSNGIRRDLGKIALASFMNPGGLAKSGDTNFVETSNSGQVRIGETGLAGLGDIRSGVLEMANVDLAEQFTDMIVTQRGFQANAKTITTSDQLLQELVRLKN.

This sequence belongs to the flagella basal body rod proteins family.

Its subcellular location is the bacterial flagellum basal body. The sequence is that of Flagellar hook protein FlgE (flgE) from Borreliella burgdorferi (strain ATCC 35210 / DSM 4680 / CIP 102532 / B31) (Borrelia burgdorferi).